The sequence spans 464 residues: Mitogen-activated protein kinase 10 (464 aa).

The Protein kinase domain maps to 64–359 (YQNLKPIGSG…VDDALQHPYI (296 aa)). Residues 70–78 (IGSGAQGIV) and Lys93 each bind ATP. Asp189 serves as the catalytic Proton acceptor. Thr221 is modified (phosphothreonine; by MAP2K7). The TXY signature appears at 221 to 223 (TPY). The residue at position 223 (Tyr223) is a Phosphotyrosine; by MAP2K4. Residues 405–464 (TKNGVVKGQPSPSGAAVNSSESLPPSSSVNDISSMSTDQTLASDTDSSLEASAGPLGCCR) are disordered. The segment covering 423 to 432 (SSESLPPSSS) has biased composition (low complexity). Residues 433–454 (VNDISSMSTDQTLASDTDSSLE) show a composition bias toward polar residues. S-palmitoyl cysteine attachment occurs at residues Cys462 and Cys463.

Belongs to the protein kinase superfamily. CMGC Ser/Thr protein kinase family. MAP kinase subfamily. As to quaternary structure, interacts with MAPK8IP1/JIP-1 and MAPK8IP3/JIP-3/JSAP1. Interacts with SPAG9/MAPK8IP4/JIP4. Interacts with HDAC9 and MAPKBP1. Interacts with ARRB2; the interaction enhances MAPK10 activation by MAP3K5. Interacts with SARM1. Interacts with JUND; interaction is inhibited in the presence of MEN1. Mg(2+) serves as cofactor. In terms of processing, dually phosphorylated on Thr-221 and Tyr-223 by MAP2K4 and MAP2K7, which activates the enzyme. MAP2K7 shows a strong preference for Thr-221 while MAP2K4 phosphorylates Tyr-223 preferentially. Weakly autophosphorylated on threonine and tyrosine residues in vitro. Post-translationally, palmitoylation regulates subcellular location and axonal development.

Its subcellular location is the cytoplasm. It localises to the membrane. The protein resides in the nucleus. It is found in the mitochondrion. The enzyme catalyses L-seryl-[protein] + ATP = O-phospho-L-seryl-[protein] + ADP + H(+). It catalyses the reaction L-threonyl-[protein] + ATP = O-phospho-L-threonyl-[protein] + ADP + H(+). Its activity is regulated as follows. Activated by threonine and tyrosine phosphorylation by two dual specificity kinases, MAP2K4 and MAP2K7. MAP2K7 phosphorylates MAPK10 on Thr-221 causing a conformational change and a large increase in Vmax for the enzyme. MAP2K4 then phosphorylates Tyr-223 resulting in a further increase in Vmax. Inhibited by dual specificity phosphatases, such as DUSP1. Inhibited by HDAC9. Functionally, serine/threonine-protein kinase involved in various processes such as neuronal proliferation, differentiation, migration and programmed cell death. Extracellular stimuli such as pro-inflammatory cytokines or physical stress stimulate the stress-activated protein kinase/c-Jun N-terminal kinase (SAP/JNK) signaling pathway. In this cascade, two dual specificity kinases MAP2K4/MKK4 and MAP2K7/MKK7 phosphorylate and activate MAPK10/JNK3. In turn, MAPK10/JNK3 phosphorylates a number of transcription factors, primarily components of AP-1 such as JUN and ATF2 and thus regulates AP-1 transcriptional activity. Plays regulatory roles in the signaling pathways during neuronal apoptosis. Phosphorylates the neuronal microtubule regulator STMN2. Acts in the regulation of the amyloid-beta precursor protein/APP signaling during neuronal differentiation by phosphorylating APP. Also participates in neurite growth in spiral ganglion neurons. Phosphorylates the CLOCK-BMAL1 heterodimer and plays a role in the photic regulation of the circadian clock. Phosphorylates JUND and this phosphorylation is inhibited in the presence of MEN1. In Rattus norvegicus (Rat), this protein is Mitogen-activated protein kinase 10 (Mapk10).